The chain runs to 493 residues: Transcript termination protein A18 (493 aa).

Residues 100–256 form the Helicase ATP-binding domain; it reads MIELKRPLYI…NSIINIAKLS (157 aa). Residue 113 to 120 participates in ATP binding; it reads LACGFGKT. A DESH box motif is present at residues 206–209; it reads DESH.

Belongs to the helicase family. Poxviruses subfamily. In terms of assembly, interacts with G2. Might be part of a transcription complex composed at least of G2, A18, and H5.

Its subcellular location is the virion. In terms of biological role, DNA helicase which seems to act as a postreplicative transcription termination factor. Involved in ATP-dependent release of nascent RNA. Forms a stable complex with single-stranded DNA, and to a lesser extent RNA. The sequence is that of Transcript termination protein A18 from Cowpox virus (strain GRI-90 / Grishak) (CPV).